Here is a 128-residue protein sequence, read N- to C-terminus: Orchestin (128 aa).

Positions 1-20 (MNKVFIIGVCLFIVSQAVLA) are cleaved as a signal peptide. A disordered region spans residues 23–95 (WDSDESSDER…DEDSDDSQES (73 aa)). 2 stretches are compositionally biased toward basic and acidic residues: residues 30-49 (DERLSDRSDESREEPRKLVV) and 56-81 (EDSNESAEVRRRDDSRESEEEPRKLS). Over residues 84–93 (TSDEDSDDSQ) the composition is skewed to acidic residues.

Phosphorylated on Ser and Tyr residues. Calcium-binding activity is dependent on serine phosphorylation but not on tyrosine phosphorylation. Posterior caeca epithelium of the gut.

It localises to the secreted. In terms of biological role, plays a role in cuticle calcification. May induce precipitation of the calcium stored in the posterior caeca as calcium carbonate. This chain is Orchestin, found in Cryptorchestia cavimana (Amphipod).